Consider the following 70-residue polypeptide: Large ribosomal subunit protein bL31 (70 aa).

Zn(2+)-binding residues include cysteine 16, cysteine 18, cysteine 37, and cysteine 40.

Belongs to the bacterial ribosomal protein bL31 family. Type A subfamily. Part of the 50S ribosomal subunit. Zn(2+) serves as cofactor.

In terms of biological role, binds the 23S rRNA. The sequence is that of Large ribosomal subunit protein bL31 from Histophilus somni (strain 2336) (Haemophilus somnus).